The chain runs to 87 residues: U3-theraphotoxin-Hhn1p (87 aa).

The N-terminal stretch at Met1–Ala24 is a signal peptide. The propeptide occupies Ser25–Arg52. Cystine bridges form between Cys54–Cys67, Cys61–Cys72, and Cys66–Cys79.

The protein belongs to the neurotoxin 10 (Hwtx-1) family. 51 (Hntx-8) subfamily. Hntx-8 sub-subfamily. As to expression, expressed by the venom gland.

Its subcellular location is the secreted. Ion channel inhibitor. In Cyriopagopus hainanus (Chinese bird spider), this protein is U3-theraphotoxin-Hhn1p.